The following is a 1114-amino-acid chain: Zinc finger E-box-binding homeobox 1 (1114 aa).

2 disordered regions span residues 1 to 105 and 142 to 163; these read MADG…EVGC and APEE…NGTP. The segment covering 15-30 has biased composition (low complexity); that stretch reads PRRNNVTNYNNVIEAN. Over residues 149-160 the composition is skewed to polar residues; the sequence is QGTPEASGQDEN. 3 consecutive C2H2-type zinc fingers follow at residues 170–193, 200–222, and 240–262; these read LTCP…KYRH, FSCS…MTSH, and FKCT…LRIH. A C2H2-type 4; atypical zinc finger spans residues 268–292; it reads YECPNCKKRFSHSGSYSSHISSKKC. Disordered regions lie at residues 304–326, 491–529, 553–588, and 636–716; these read SGLK…PARP, NLKK…TNDS, KNPP…GQPP, and QISV…SRNS. The segment covering 309–326 has biased composition (low complexity); that stretch reads SQCSSPSLSASPGSPARP. Basic and acidic residues predominate over residues 504-523; sequence KNEKLPEDLTVKSEKDKNFE. Composition is skewed to polar residues over residues 573–584 and 636–681; these read APSETGENNLSP and QISV…QNPA. Residues 581–640 constitute a DNA-binding region (homeobox; atypical); that stretch reads NLSPGQPPLKNLLSLLKAYYALNAQPSAEELSKIADSVNLPLDVVKKWFEKMQAGQISVQ. The segment covering 682–716 has biased composition (low complexity); that stretch reads NTSKSQTSSGGSTQNGSRSSTPSPSPLNLSSSRNS. The CTBP-binding motif motif lies at 767-771; sequence PLNLT. 2 stretches are compositionally biased toward polar residues: residues 852 to 866 and 874 to 890; these read AVQE…ANGS and SSEG…SDST. Residues 852–898 are disordered; the sequence is AVQETPPKQTQANGSQDERQDTSSEGVSNVEDQNDSDSTPPKKKMRK. 2 consecutive C2H2-type zinc fingers follow at residues 904 to 926 and 932 to 954; these read YACD…KYEH and HECG…MRLH. Residues 960–981 form a C2H2-type 7; atypical zinc finger; sequence YQCDKCGKRFSHSGSYSQHMNH. The disordered stretch occupies residues 989 to 1114; that stretch reads EAEERDSTEQ…QVSEEKTNKA (126 aa). Residues 1031-1047 are compositionally biased toward acidic residues; it reads EEEEDSEKEEEEEEEKD. The segment covering 1048–1062 has biased composition (basic and acidic residues); the sequence is VEGLQEEKECRKLQD. A compositionally biased stretch (acidic residues) spans 1063–1078; the sequence is VEEEEEVEEEEEEEEG. Residues 1079–1089 are compositionally biased toward basic and acidic residues; it reads KTEGNKNDDVV.

It belongs to the delta-EF1/ZFH-1 C2H2-type zinc-finger family. In terms of tissue distribution, expression is developmentally regulated with high expression in mesoderm, nervous system and lens.

Its subcellular location is the nucleus. Functionally, acts as a transcriptional repressor. Positively regulates neuronal differentiation. Represses transcription by binding to the E box-containing promoter. Binds to delta 1-crystallin enhancer core and represses lens-specific transcription. It also binds many other non-lens specific DNA sequences. The protein is Zinc finger E-box-binding homeobox 1 (ZEB1) of Gallus gallus (Chicken).